A 464-amino-acid polypeptide reads, in one-letter code: Soluble pyridine nucleotide transhydrogenase (464 aa).

35-44 (DSRRQVGGNC) is an FAD binding site.

The protein belongs to the class-I pyridine nucleotide-disulfide oxidoreductase family. It depends on FAD as a cofactor.

The protein resides in the cytoplasm. The enzyme catalyses NAD(+) + NADPH = NADH + NADP(+). Its function is as follows. Conversion of NADPH, generated by peripheral catabolic pathways, to NADH, which can enter the respiratory chain for energy generation. The sequence is that of Soluble pyridine nucleotide transhydrogenase from Pseudomonas syringae pv. syringae (strain B728a).